A 396-amino-acid polypeptide reads, in one-letter code: 1-deoxy-D-xylulose 5-phosphate reductoisomerase (396 aa).

The NADPH site is built by threonine 15, glycine 16, serine 17, isoleucine 18, glycine 41, and asparagine 130. Residue lysine 131 participates in 1-deoxy-D-xylulose 5-phosphate binding. An NADPH-binding site is contributed by glutamate 132. Residue aspartate 155 coordinates Mn(2+). Positions 156, 157, 181, and 204 each coordinate 1-deoxy-D-xylulose 5-phosphate. Position 157 (glutamate 157) interacts with Mn(2+). An NADPH-binding site is contributed by glycine 210. Serine 217, asparagine 222, lysine 223, and glutamate 226 together coordinate 1-deoxy-D-xylulose 5-phosphate. Position 226 (glutamate 226) interacts with Mn(2+).

This sequence belongs to the DXR family. It depends on Mg(2+) as a cofactor. Mn(2+) serves as cofactor.

It carries out the reaction 2-C-methyl-D-erythritol 4-phosphate + NADP(+) = 1-deoxy-D-xylulose 5-phosphate + NADPH + H(+). Its pathway is isoprenoid biosynthesis; isopentenyl diphosphate biosynthesis via DXP pathway; isopentenyl diphosphate from 1-deoxy-D-xylulose 5-phosphate: step 1/6. In terms of biological role, catalyzes the NADPH-dependent rearrangement and reduction of 1-deoxy-D-xylulose-5-phosphate (DXP) to 2-C-methyl-D-erythritol 4-phosphate (MEP). The sequence is that of 1-deoxy-D-xylulose 5-phosphate reductoisomerase from Bifidobacterium longum (strain DJO10A).